A 463-amino-acid polypeptide reads, in one-letter code: Calcitonin gene-related peptide type 1 receptor (463 aa).

The signal sequence occupies residues 1–22 (MDKKHILCFLVLLPLNMALISA). The Extracellular portion of the chain corresponds to 23–138 (ESEEGVNQTD…STHEKVKTAL (116 aa)). N-linked (GlcNAc...) asparagine glycosylation is found at asparagine 29, asparagine 65, asparagine 117, asparagine 122, asparagine 127, and asparagine 128. Cystine bridges form between cysteine 47/cysteine 73, cysteine 64/cysteine 104, and cysteine 87/cysteine 126. A helical transmembrane segment spans residues 139–163 (NLFYLTIIGHGLSIASLIISLIIFF). Topologically, residues 164–174 (YFKSLSCQRIT) are cytoplasmic. The chain crosses the membrane as a helical span at residues 175 to 197 (LHKNLFFSFICNSIVTIIHLTAV). Topologically, residues 198 to 208 (ANNQALVATNP) are extracellular. Residues 209 to 237 (VSCKVSQFIHLYLMGCNYFWMLCEGVYLH) form a helical membrane-spanning segment. At 238–251 (TLIVVAVFAEKQHL) the chain is on the cytoplasmic side. The chain crosses the membrane as a helical span at residues 252-272 (MWYYFLGWGFPLLPACIHAIA). Over 273 to 288 (RSLYYNDNCWISSDTH) the chain is Extracellular. The segment at 287–288 (TH) is required for RAMP3 interaction. Residues 289-313 (LLYIIHGPICAALLVNLFFLLNIVR) traverse the membrane as a helical segment. The Cytoplasmic segment spans residues 314 to 328 (VLITKLKVTHQVESN). Residues 329 to 350 (LYMKAVRATLILVPLLGIEFVL) traverse the membrane as a helical segment. Topologically, residues 351–365 (FPWRPEGKVAEEVYD) are extracellular. The helical transmembrane segment at 366–386 (YVMHILMHFQGLLVATIFCFF) threads the bilayer. At 387–463 (NGEVQAILRR…KSENMYDLVM (77 aa)) the chain is on the cytoplasmic side. 2 positions are modified to phosphoserine: serine 419 and serine 444.

Belongs to the G-protein coupled receptor 2 family. In terms of assembly, heterodimer of CALCRL and RAMP1; the receptor complex functions as CGRP receptor. Heterodimer of CALCRL and RAMP2 or CALCRL and RAMP3; the complexes function as adrenomedullin receptor. As to expression, expressed predominantly in the lung, thymus, heart and brain.

The protein resides in the cell membrane. G protein-coupled receptor which specificity is determined by its interaction with receptor-activity-modifying proteins (RAMPs). Together with RAMP1, form the receptor complex for calcitonin-gene-related peptides CALCA/CGRP1 and CALCB/CGRP2. Together with RAMP2 or RAMP3, function as receptor complexes for adrenomedullin (ADM and ADM2). Ligand binding causes a conformation change that triggers signaling via guanine nucleotide-binding proteins (G proteins) and modulates the activity of downstream effectors. Activates cAMP-dependent pathway. In Mus musculus (Mouse), this protein is Calcitonin gene-related peptide type 1 receptor.